The following is a 209-amino-acid chain: Thymidylate kinase (209 aa).

7–14 (GIDGAGKS) contacts ATP.

It belongs to the thymidylate kinase family.

The enzyme catalyses dTMP + ATP = dTDP + ADP. Functionally, phosphorylation of dTMP to form dTDP in both de novo and salvage pathways of dTTP synthesis. This Mycoplasma mobile (strain ATCC 43663 / 163K / NCTC 11711) (Mesomycoplasma mobile) protein is Thymidylate kinase.